The chain runs to 390 residues: Aspartate carbamoyltransferase, chloroplastic (390 aa).

The transit peptide at 1-68 (MSIASSLTSA…NLTRNVGPVR (68 aa)) directs the protein to the chloroplast. Positions 136 and 137 each coordinate carbamoyl phosphate. Arginine 136 and threonine 137 together coordinate UMP. Lysine 166 provides a ligand contact to L-aspartate. Residues arginine 187, histidine 215, and glutamine 218 each contribute to the carbamoyl phosphate site. UMP contacts are provided by arginine 187 and histidine 215. The UMP site is built by arginine 248 and arginine 310. Arginine 248 and arginine 310 together coordinate L-aspartate. Residues leucine 350 and proline 351 each coordinate carbamoyl phosphate.

This sequence belongs to the aspartate/ornithine carbamoyltransferase superfamily. ATCase family. In terms of assembly, homotrimer.

Its subcellular location is the plastid. It localises to the chloroplast. The catalysed reaction is carbamoyl phosphate + L-aspartate = N-carbamoyl-L-aspartate + phosphate + H(+). It participates in pyrimidine metabolism; UMP biosynthesis via de novo pathway; (S)-dihydroorotate from bicarbonate: step 2/3. Its activity is regulated as follows. Feedback inhibited by UMP. Its function is as follows. Catalyzes the condensation of carbamoyl phosphate and aspartate to form carbamoyl aspartate and inorganic phosphate, the committed step in the de novo pyrimidine nucleotide biosynthesis pathway. The protein is Aspartate carbamoyltransferase, chloroplastic (PYRB) of Arabidopsis thaliana (Mouse-ear cress).